Reading from the N-terminus, the 264-residue chain is MTKTWPPRTVIRKSGGLRGMRTLESALHRGGLGPVAGVDEVGRGACAGPLVVAACVLGPGRIASLAALDDSKKLSEQAREKLFPLICRYAVAYHVVFIPSAEVDRRGVHVANIEGMRRAVAGLAVRPGYVLSDGFRVPGLPMPSLPVIGGDAAAACIAAASVLAKVSRDRVMVALDADHPGYGFAEHKGYSTPAHSRALARLGPCPQHRYSFINVRRVASGSNTAEVADGQPDPRDGTAQTGEGRWSKSSHPATMRATGRAQGT.

The region spanning 33 to 224 (GPVAGVDEVG…VRRVASGSNT (192 aa)) is the RNase H type-2 domain. A divalent metal cation contacts are provided by Asp39, Glu40, and Asp133. The disordered stretch occupies residues 222–264 (SNTAEVADGQPDPRDGTAQTGEGRWSKSSHPATMRATGRAQGT).

It belongs to the RNase HII family. It depends on Mn(2+) as a cofactor. Mg(2+) is required as a cofactor.

It is found in the cytoplasm. The catalysed reaction is Endonucleolytic cleavage to 5'-phosphomonoester.. In terms of biological role, endonuclease that specifically degrades the RNA of RNA-DNA hybrids. In Mycobacterium bovis (strain BCG / Pasteur 1173P2), this protein is Ribonuclease HII.